The primary structure comprises 489 residues: MLPRPYIFSHNDGPSSHLFQHVLPHNVSQQQRIEAHLNSTNNFIGPPMNAPRFIPTYQWTPVELSDVACSPNGPMGNNRKRRIQDNSDINLKRQRFSCPSPHNQSARNSNFTSQPVTRPVTGREVTCPTCSSATFIPGGCVPSLGETCHQNAFSPSSVKDKLSQQILNLFFACEQQSDDLEKKESCRAALQTDIQKIFPCAKVFLGGSSLNGFGSRSSDADLCLVIEEGPVNHRKDAVYVLSLVRKLLYKLSYIEKPQLIRAKVPIVKFRDRISGVEFDLNFNNTVGIRNTFLLRTYAFVEKRVRPLVLVIKKWANHHCINDASRGTLSSYTLVLMVLHYLQTLPEPVIPCLQRDYPTCFDPKMDIHLVPSGPSDIPAFVSRNQSSLGDLFLGFLRYYATVFKWDKQVISVRMARTLPKSNCKEWKDKFICVEEPFNRTNTARAVHERMKFEAIKAAFIESHRLLQLRKDLNFILPKSKQMARPQTAPR.

Positions 93 to 118 (RQRFSCPSPHNQSARNSNFTSQPVTR) are disordered. A compositionally biased stretch (polar residues) spans 100–116 (SPHNQSARNSNFTSQPV). Asp-219 and Asp-221 together coordinate Mg(2+). A PAP-associated domain is found at 386–440 (SLGDLFLGFLRYYATVFKWDKQVISVRMARTLPKSNCKEWKDKFICVEEPFNRTN).

The protein belongs to the DNA polymerase type-B-like family. GLD2 subfamily. Mg(2+) serves as cofactor. The cofactor is Mn(2+).

The protein resides in the cytoplasm. The catalysed reaction is RNA(n) + ATP = RNA(n)-3'-adenine ribonucleotide + diphosphate. Functionally, cytoplasmic poly(A) RNA polymerase that adds successive AMP monomers to the 3'-end of specific RNAs, forming a poly(A) tail. In contrast to the canonical nuclear poly(A) RNA polymerase, it only adds poly(A) to selected cytoplasmic mRNAs. May not play a role in replication-dependent histone mRNA degradation. The sequence is that of Poly(A) RNA polymerase GLD2 from Danio rerio (Zebrafish).